The sequence spans 824 residues: Ras guanine nucleotide exchange factor I (824 aa).

Disordered stretches follow at residues Met-1–Lys-51 and Gly-65–Asp-167. Residues Ser-8 to Ser-41 show a composition bias toward low complexity. A compositionally biased stretch (polar residues) spans Asn-83 to Ser-95. Positions Ser-104–Ile-116 are enriched in low complexity. Residues Gly-117–Ser-128 are compositionally biased toward gly residues. A compositionally biased stretch (low complexity) spans Ser-136–Asp-167. In terms of domain architecture, LisH spans Gly-223–Tyr-255. 2 disordered regions span residues Tyr-330 to Thr-354 and Asn-398 to Thr-425. Positions Val-331–Lys-341 are enriched in basic and acidic residues. A compositionally biased stretch (low complexity) spans Ser-343 to Thr-354. A compositionally biased stretch (polar residues) spans Leu-413–Thr-425. An N-terminal Ras-GEF domain is found at Leu-426–Leu-551. The region spanning Asp-585–Arg-816 is the Ras-GEF domain.

Functionally, promotes the exchange of Ras-bound GDP by GTP. In Dictyostelium discoideum (Social amoeba), this protein is Ras guanine nucleotide exchange factor I (gefI).